We begin with the raw amino-acid sequence, 123 residues long: MATINQLVRQPRKRSVEKSDVPALQNCPQRRGVCTRVYTTTPKKPNSALRKVCRVRLTNGFEVSSYIGGEGHNLQEHSVVLIRGGRVKDLPGVRYHTVRGSLDTSGVKGRNQGRSKYGTKRPK.

The segment at Met-1–Pro-22 is disordered. 3-methylthioaspartic acid is present on Asp-89. Residues Gly-100–Lys-123 form a disordered region. Over residues Asn-111–Lys-123 the composition is skewed to basic residues.

Belongs to the universal ribosomal protein uS12 family. As to quaternary structure, part of the 30S ribosomal subunit. Contacts proteins S8 and S17. May interact with IF1 in the 30S initiation complex.

With S4 and S5 plays an important role in translational accuracy. Functionally, interacts with and stabilizes bases of the 16S rRNA that are involved in tRNA selection in the A site and with the mRNA backbone. Located at the interface of the 30S and 50S subunits, it traverses the body of the 30S subunit contacting proteins on the other side and probably holding the rRNA structure together. The combined cluster of proteins S8, S12 and S17 appears to hold together the shoulder and platform of the 30S subunit. The chain is Small ribosomal subunit protein uS12 from Pseudomonas entomophila (strain L48).